Consider the following 366-residue polypeptide: tRNA/tmRNA (uracil-C(5))-methyltransferase (366 aa).

S-adenosyl-L-methionine contacts are provided by glutamine 189, tyrosine 217, asparagine 222, glutamate 238, and aspartate 298. The active-site Nucleophile is the cysteine 323. Glutamate 357 functions as the Proton acceptor in the catalytic mechanism.

Belongs to the class I-like SAM-binding methyltransferase superfamily. RNA M5U methyltransferase family. TrmA subfamily.

The catalysed reaction is uridine(54) in tRNA + S-adenosyl-L-methionine = 5-methyluridine(54) in tRNA + S-adenosyl-L-homocysteine + H(+). The enzyme catalyses uridine(341) in tmRNA + S-adenosyl-L-methionine = 5-methyluridine(341) in tmRNA + S-adenosyl-L-homocysteine + H(+). In terms of biological role, dual-specificity methyltransferase that catalyzes the formation of 5-methyluridine at position 54 (m5U54) in all tRNAs, and that of position 341 (m5U341) in tmRNA (transfer-mRNA). The protein is tRNA/tmRNA (uracil-C(5))-methyltransferase of Shewanella putrefaciens (strain CN-32 / ATCC BAA-453).